The sequence spans 109 residues: Protein TAR1 (109 aa).

Residues 62-109 (HFTNNWDPRHTGFSPSMTSCSKEHRQGPATKLPSSNYNSDVEDARFQI) form a disordered region.

It localises to the mitochondrion. In terms of biological role, may be involved in mtDNA stability or mitochondrial gene expression regulation at the post-transcriptional level. The polypeptide is Protein TAR1 (TAR1-A) (Kluyveromyces lactis (strain ATCC 8585 / CBS 2359 / DSM 70799 / NBRC 1267 / NRRL Y-1140 / WM37) (Yeast)).